A 424-amino-acid chain; its full sequence is Na(+)/H(+) antiporter NhaA (424 aa).

Transmembrane regions (helical) follow at residues 23-43 (ILLIFAAILAMIVANSPLATL), 65-85 (VHLWINDGLMAVFFLLVGLEI), 102-122 (LPFIAAAAGMAVPAALYMFFV), 131-151 (GWAIPAATDIAFAMGVLALLG), 160-180 (LFLVTVAIVDDMGAVAIIALF), 183-203 (AKINLLALGAAAAILGIMFAC), 211-231 (LLVYMALFLLLWYAMLLSGVH), 265-285 (ALHPTVAFAIVPLFGFANAGV), 303-323 (IAAGLFLGKQIGIFGSVWLAV), 341-361 (AVSMLCGIGFTMSLFIGSLAF), and 373-393 (IGILMGSLASALVGFAVLRLA).

It belongs to the NhaA Na(+)/H(+) (TC 2.A.33) antiporter family.

The protein resides in the cell inner membrane. It catalyses the reaction Na(+)(in) + 2 H(+)(out) = Na(+)(out) + 2 H(+)(in). In terms of biological role, na(+)/H(+) antiporter that extrudes sodium in exchange for external protons. The chain is Na(+)/H(+) antiporter NhaA from Sphingopyxis alaskensis (strain DSM 13593 / LMG 18877 / RB2256) (Sphingomonas alaskensis).